Reading from the N-terminus, the 270-residue chain is UPF0354 protein BcerKBAB4_4524 (270 aa).

It belongs to the UPF0354 family.

This chain is UPF0354 protein BcerKBAB4_4524, found in Bacillus mycoides (strain KBAB4) (Bacillus weihenstephanensis).